The primary structure comprises 419 residues: Adenylosuccinate synthetase (419 aa).

Residues 11–17 (GDEGKGK) and 39–41 (GHS) contribute to the GTP site. The active-site Proton acceptor is Asp12. Mg(2+) is bound by residues Asp12 and Gly39. IMP is bound by residues 12–15 (DEGK), 37–40 (NAGH), Thr129, Arg143, Asn221, Thr236, and Arg296. His40 serves as the catalytic Proton donor. 292 to 298 (VSTGRKR) is a binding site for substrate. GTP-binding positions include Arg298, 324 to 326 (KLD), and 408 to 410 (GTG).

Belongs to the adenylosuccinate synthetase family. As to quaternary structure, homodimer. It depends on Mg(2+) as a cofactor.

The protein resides in the cytoplasm. The enzyme catalyses IMP + L-aspartate + GTP = N(6)-(1,2-dicarboxyethyl)-AMP + GDP + phosphate + 2 H(+). The protein operates within purine metabolism; AMP biosynthesis via de novo pathway; AMP from IMP: step 1/2. In terms of biological role, plays an important role in the de novo pathway and in the salvage pathway of purine nucleotide biosynthesis. Catalyzes the first committed step in the biosynthesis of AMP from IMP. In Chaetomium globosum (strain ATCC 6205 / CBS 148.51 / DSM 1962 / NBRC 6347 / NRRL 1970) (Soil fungus), this protein is Adenylosuccinate synthetase.